The sequence spans 218 residues: N-(5'-phosphoribosyl)anthranilate isomerase (218 aa).

The protein belongs to the TrpF family.

The enzyme catalyses N-(5-phospho-beta-D-ribosyl)anthranilate = 1-(2-carboxyphenylamino)-1-deoxy-D-ribulose 5-phosphate. It functions in the pathway amino-acid biosynthesis; L-tryptophan biosynthesis; L-tryptophan from chorismate: step 3/5. The chain is N-(5'-phosphoribosyl)anthranilate isomerase from Alcanivorax borkumensis (strain ATCC 700651 / DSM 11573 / NCIMB 13689 / SK2).